A 629-amino-acid chain; its full sequence is tRNA uridine 5-carboxymethylaminomethyl modification enzyme MnmG (629 aa).

Residues 14–19 (GAGHAG), Val-126, and Ser-181 each bind FAD. 273 to 287 (GPRYCPSIEDKVVRF) contributes to the NAD(+) binding site. Position 370 (Gln-370) interacts with FAD.

This sequence belongs to the MnmG family. As to quaternary structure, homodimer. Heterotetramer of two MnmE and two MnmG subunits. Requires FAD as cofactor.

It is found in the cytoplasm. Its function is as follows. NAD-binding protein involved in the addition of a carboxymethylaminomethyl (cmnm) group at the wobble position (U34) of certain tRNAs, forming tRNA-cmnm(5)s(2)U34. This chain is tRNA uridine 5-carboxymethylaminomethyl modification enzyme MnmG, found in Bacillus thuringiensis (strain Al Hakam).